A 476-amino-acid chain; its full sequence is Ribulose bisphosphate carboxylase large chain (476 aa).

Positions Met-1–Ser-2 are excised as a propeptide. Pro-3 carries the post-translational modification N-acetylproline. Lys-14 bears the N6,N6,N6-trimethyllysine mark. Residues Asn-123 and Thr-173 each contribute to the substrate site. The active-site Proton acceptor is Lys-175. Position 177 (Lys-177) interacts with substrate. Residues Lys-201, Asp-203, and Glu-204 each coordinate Mg(2+). The residue at position 201 (Lys-201) is an N6-carboxylysine. The Proton acceptor role is filled by His-294. 3 residues coordinate substrate: Arg-295, His-327, and Ser-379.

The protein belongs to the RuBisCO large chain family. Type I subfamily. In terms of assembly, heterohexadecamer of 8 large chains and 8 small chains; disulfide-linked. The disulfide link is formed within the large subunit homodimers. Requires Mg(2+) as cofactor. The disulfide bond which can form in the large chain dimeric partners within the hexadecamer appears to be associated with oxidative stress and protein turnover.

The protein localises to the plastid. Its subcellular location is the chloroplast. The enzyme catalyses 2 (2R)-3-phosphoglycerate + 2 H(+) = D-ribulose 1,5-bisphosphate + CO2 + H2O. It catalyses the reaction D-ribulose 1,5-bisphosphate + O2 = 2-phosphoglycolate + (2R)-3-phosphoglycerate + 2 H(+). In terms of biological role, ruBisCO catalyzes two reactions: the carboxylation of D-ribulose 1,5-bisphosphate, the primary event in carbon dioxide fixation, as well as the oxidative fragmentation of the pentose substrate in the photorespiration process. Both reactions occur simultaneously and in competition at the same active site. This Zea mays (Maize) protein is Ribulose bisphosphate carboxylase large chain.